Consider the following 87-residue polypeptide: UPF0250 protein Ent638_1166 (87 aa).

The protein belongs to the UPF0250 family.

This is UPF0250 protein Ent638_1166 from Enterobacter sp. (strain 638).